Consider the following 64-residue polypeptide: Movement protein TGBp3 (64 aa).

Over 1-4 (MRSV) the chain is Lumenal. The chain crosses the membrane as a helical span at residues 5-27 (ALTLCAIIAGYLLVSNLQNVFSP). The Cytoplasmic portion of the chain corresponds to 28–64 (EVCTLVITGESIRINGCNLSPAHFRAISHLKVLQIHL).

The protein belongs to the Tymovirales TGBp3 protein family.

The protein localises to the host endoplasmic reticulum membrane. Plays a role in viral cell-to-cell propagation, by facilitating genome transport to neighboring plant cells through plasmosdesmata. May induce the formation of granular vesicles derived from the Endoplasmic reticulum, which align on actin filaments. The polypeptide is Movement protein TGBp3 (Lily symptomless virus (LSV)).